Consider the following 537-residue polypeptide: T-complex protein 1 subunit theta (537 aa).

Belongs to the TCP-1 chaperonin family. As to quaternary structure, heterooligomeric complex.

It is found in the cytoplasm. Its function is as follows. Molecular chaperone; assists the folding of proteins upon ATP hydrolysis. Known to play a role, in vitro, in the folding of actin and tubulin. This is T-complex protein 1 subunit theta (cct8) from Dictyostelium discoideum (Social amoeba).